Reading from the N-terminus, the 372-residue chain is Protein-glutamate methylesterase/protein-glutamine glutaminase 1 (372 aa).

The 118-residue stretch at 4–121 (KVLVVDDSSF…ATNKDDAILL (118 aa)) folds into the Response regulatory domain. The residue at position 55 (D55) is a 4-aspartylphosphate. A disordered region spans residues 138–174 (VVRPTTPTPPPRSSASSVLGGVSTHTQPAPVRSSHAA). Residues 179–372 (SGKQYKLLLI…ESILKESARG (194 aa)) enclose the CheB-type methylesterase domain. Active-site residues include S191, H218, and D314.

The protein belongs to the CheB family. In terms of processing, phosphorylated by CheA. Phosphorylation of the N-terminal regulatory domain activates the methylesterase activity.

The protein localises to the cytoplasm. It carries out the reaction [protein]-L-glutamate 5-O-methyl ester + H2O = L-glutamyl-[protein] + methanol + H(+). It catalyses the reaction L-glutaminyl-[protein] + H2O = L-glutamyl-[protein] + NH4(+). Involved in chemotaxis. Part of a chemotaxis signal transduction system that modulates chemotaxis in response to various stimuli. Catalyzes the demethylation of specific methylglutamate residues introduced into the chemoreceptors (methyl-accepting chemotaxis proteins or MCP) by CheR. Also mediates the irreversible deamidation of specific glutamine residues to glutamic acid. This is Protein-glutamate methylesterase/protein-glutamine glutaminase 1 from Shewanella sp. (strain MR-4).